Reading from the N-terminus, the 335-residue chain is Mitochondrial amidoxime reducing component 2 (335 aa).

A mitochondrion-targeting transit peptide spans 1 to 35; that stretch reads MGASSSSALARLGLPAQARPRWLGVAVLGLAAVAL. Glycyl lysine isopeptide (Lys-Gly) (interchain with G-Cter in ubiquitin) cross-links involve residues Lys59, Lys138, and Lys144. Residue Lys156 is modified to N6-acetyllysine; alternate. Lys156 is covalently cross-linked (Glycyl lysine isopeptide (Lys-Gly) (interchain with G-Cter in ubiquitin); alternate). Residues Lys173, Lys187, Lys287, and Lys294 each participate in a glycyl lysine isopeptide (Lys-Gly) (interchain with G-Cter in ubiquitin) cross-link. Residues 188–334 enclose the MOSC domain; it reads GRTSRKLLPT…LRVGDPVYRM (147 aa).

Component of a complex composed of cytochrome b5, NADH-cytochrome b5 reductase (CYB5R3) and MTARC2. The cofactor is Mo-molybdopterin. Post-translationally, ubiquitinated by PRKN during mitophagy, leading to its degradation and enhancement of mitophagy. Deubiquitinated by USP30.

It is found in the mitochondrion outer membrane. The protein resides in the peroxisome. It carries out the reaction N(omega)-hydroxy-L-arginine + 2 Fe(II)-[cytochrome b5] + 2 H(+) = L-arginine + 2 Fe(III)-[cytochrome b5] + H2O. Functionally, catalyzes the reduction of N-oxygenated molecules, acting as a counterpart of cytochrome P450 and flavin-containing monooxygenases in metabolic cycles. As a component of prodrug-converting system, reduces a multitude of N-hydroxylated prodrugs particularly amidoximes, leading to increased drug bioavailability. May be involved in mitochondrial N(omega)-hydroxy-L-arginine (NOHA) reduction, regulating endogenous nitric oxide levels and biosynthesis. Postulated to cleave the N-OH bond of N-hydroxylated substrates in concert with electron transfer from NADH to cytochrome b5 reductase then to cytochrome b5, the ultimate electron donor that primes the active site for substrate reduction. The protein is Mitochondrial amidoxime reducing component 2 (MTARC2) of Macaca fascicularis (Crab-eating macaque).